A 194-amino-acid polypeptide reads, in one-letter code: MSNLVPMVVEQTSKGERSYDIFSRLLKDRIIMLSGEVNDVTANLVVAQLLFLESEDPDKDIHLYINSPGGSITSGMAIYDTMQYIKPDVSTICIGMAASMGAFLLSSGAKGKRFALPNAEIMIHQPLGGFQGQATDIDIHAKRILKIKDKLNQILSENTNQPLEKIKVDVERDYFMEASEAVEYGLIDKVIERK.

Ser99 acts as the Nucleophile in catalysis. His124 is a catalytic residue.

It belongs to the peptidase S14 family. In terms of assembly, fourteen ClpP subunits assemble into 2 heptameric rings which stack back to back to give a disk-like structure with a central cavity, resembling the structure of eukaryotic proteasomes.

The protein resides in the cytoplasm. The catalysed reaction is Hydrolysis of proteins to small peptides in the presence of ATP and magnesium. alpha-casein is the usual test substrate. In the absence of ATP, only oligopeptides shorter than five residues are hydrolyzed (such as succinyl-Leu-Tyr-|-NHMec, and Leu-Tyr-Leu-|-Tyr-Trp, in which cleavage of the -Tyr-|-Leu- and -Tyr-|-Trp bonds also occurs).. In terms of biological role, cleaves peptides in various proteins in a process that requires ATP hydrolysis. Has a chymotrypsin-like activity. Plays a major role in the degradation of misfolded proteins. The chain is ATP-dependent Clp protease proteolytic subunit from Clostridium perfringens (strain ATCC 13124 / DSM 756 / JCM 1290 / NCIMB 6125 / NCTC 8237 / Type A).